Consider the following 294-residue polypeptide: Ribosomal RNA small subunit methyltransferase A (294 aa).

S-adenosyl-L-methionine-binding residues include N31, L33, G58, E79, D104, and N129.

Belongs to the class I-like SAM-binding methyltransferase superfamily. rRNA adenine N(6)-methyltransferase family. RsmA subfamily.

It is found in the cytoplasm. It catalyses the reaction adenosine(1518)/adenosine(1519) in 16S rRNA + 4 S-adenosyl-L-methionine = N(6)-dimethyladenosine(1518)/N(6)-dimethyladenosine(1519) in 16S rRNA + 4 S-adenosyl-L-homocysteine + 4 H(+). Its function is as follows. Specifically dimethylates two adjacent adenosines (A1518 and A1519) in the loop of a conserved hairpin near the 3'-end of 16S rRNA in the 30S particle. May play a critical role in biogenesis of 30S subunits. The sequence is that of Ribosomal RNA small subunit methyltransferase A from Oceanobacillus iheyensis (strain DSM 14371 / CIP 107618 / JCM 11309 / KCTC 3954 / HTE831).